Here is a 67-residue protein sequence, read N- to C-terminus: uncharacterized protein (67 aa).

The next 2 membrane-spanning stretches (helical) occupy residues 10-30 (EFFI…IIMW) and 40-60 (LMVG…WMVF).

This sequence belongs to the plectrovirus ORF10 family.

Its subcellular location is the host membrane. This is an uncharacterized protein from Spiroplasma melliferum (SpV1).